The following is a 293-amino-acid chain: Undecaprenyl-diphosphatase (293 aa).

A run of 7 helical transmembrane segments spans residues 3–23 (IALAIKALILGIVEGLTEFLP), 43–63 (KGKIFEIVIQFGAILAVCWEF), 85–105 (INVIVATIPAITLALIFGKAI), 109–129 (LFNPIVVASAFILGGFVILWA), 203–223 (VATEFSFFLAIPVIFGATVYE), 238–258 (IFAVGFVAAFISAFFCVRWLL), and 269–289 (FAWYRIIFGIIVLATAYTHLI).

This sequence belongs to the UppP family.

The protein localises to the cell inner membrane. The enzyme catalyses di-trans,octa-cis-undecaprenyl diphosphate + H2O = di-trans,octa-cis-undecaprenyl phosphate + phosphate + H(+). Its function is as follows. Catalyzes the dephosphorylation of undecaprenyl diphosphate (UPP). Confers resistance to bacitracin. The chain is Undecaprenyl-diphosphatase from Ralstonia pickettii (strain 12J).